Reading from the N-terminus, the 88-residue chain is Beta-insect excitatory toxin BmKIT1 (88 aa).

A signal peptide spans 1–18; that stretch reads MKFFLIFLVIFPIMGVLG. The LCN-type CS-alpha/beta domain maps to 20–83; sequence KNGYAVDSSG…IKDATKSYCD (64 aa). Disulfide bonds link cysteine 34/cysteine 55, cysteine 40/cysteine 60, cysteine 44/cysteine 62, and cysteine 56/cysteine 82. Isoleucine amide is present on isoleucine 87.

Belongs to the long (4 C-C) scorpion toxin superfamily. Sodium channel inhibitor family. Beta subfamily. As to expression, expressed by the venom gland.

It is found in the secreted. In terms of biological role, excitatory insect beta-toxins induce a spastic paralysis. They bind voltage-independently at site-4 of sodium channels (Nav) and shift the voltage of activation toward more negative potentials thereby affecting sodium channel activation and promoting spontaneous and repetitive firing. This toxin is active only on insects. In Olivierus martensii (Manchurian scorpion), this protein is Beta-insect excitatory toxin BmKIT1.